Here is a 681-residue protein sequence, read N- to C-terminus: Type VI secretion system spike protein VgrG2 (681 aa).

The interval 284–309 (AVAGSGKSNSSALQPGQTFSLTEHPN) is disordered. Positions 289 to 309 (GKSNSSALQPGQTFSLTEHPN) are enriched in polar residues.

This sequence belongs to the VgrG protein family.

Functionally, part of the type VI secretion system specialized secretion system, which delivers several virulence factors in both prokaryotic and eukaryotic cells during infection. Plays an essential role in bacterial mobility and biofilm formation. The polypeptide is Type VI secretion system spike protein VgrG2 (Aeromonas hydrophila).